The sequence spans 79 residues: Beta-hexatoxin-Mg1a (79 aa).

A signal peptide spans 1–20 (MKAPATTLILVMSLISVLWA). Positions 21–50 (TPDLEEGDLLAELGDLIATDDEYPMKPEER) are excised as a propeptide. Intrachain disulfides connect Cys-52/Cys-66, Cys-59/Cys-71, and Cys-65/Cys-76.

It belongs to the neurotoxin 15 family. 01 (magi-5) subfamily. In terms of tissue distribution, expressed by the venom gland.

It is found in the secreted. Functionally, insect and vertebrate active toxin. Binds to site 4 of mammalian voltage-gated sodium channels and shifts the activation voltage of the mammalian Nav1.2a/SCN2A channel to more hyperpolarized voltages, whereas the insect channel, DmNav1 (para), is not affected. Competes for binding at site 3 of the insect sodium channel. Causes temporary paralysis when injected into lepidopteran larvae at 8.6 nmol/g. A low intracranial injection dose into mice causes lacrimation, closure of the eyes and sweating. A high injection dose causes extensive lacrimation and death. This chain is Beta-hexatoxin-Mg1a, found in Macrothele gigas (Japanese funnel web spider).